The primary structure comprises 127 residues: Glycine cleavage system H protein (127 aa).

The Lipoyl-binding domain occupies 23-105 (KVSVGITDFA…YGEGWIAVIE (83 aa)). Lys-64 carries the N6-lipoyllysine modification.

It belongs to the GcvH family. As to quaternary structure, the glycine cleavage system is composed of four proteins: P, T, L and H. Requires (R)-lipoate as cofactor.

Its function is as follows. The glycine cleavage system catalyzes the degradation of glycine. The H protein shuttles the methylamine group of glycine from the P protein to the T protein. The sequence is that of Glycine cleavage system H protein from Coprothermobacter proteolyticus (strain ATCC 35245 / DSM 5265 / OCM 4 / BT).